A 485-amino-acid polypeptide reads, in one-letter code: Glutamate--tRNA ligase (485 aa).

Residues 11–21 (PSPTGYMHVGN) carry the 'HIGH' region motif. Positions 108, 110, 135, and 137 each coordinate Zn(2+). The 'KMSKS' region signature appears at 252 to 256 (KLSKR). ATP is bound at residue Lys-255.

This sequence belongs to the class-I aminoacyl-tRNA synthetase family. Glutamate--tRNA ligase type 1 subfamily. Monomer. Zn(2+) serves as cofactor.

The protein localises to the cytoplasm. The enzyme catalyses tRNA(Glu) + L-glutamate + ATP = L-glutamyl-tRNA(Glu) + AMP + diphosphate. Catalyzes the attachment of glutamate to tRNA(Glu) in a two-step reaction: glutamate is first activated by ATP to form Glu-AMP and then transferred to the acceptor end of tRNA(Glu). In Clostridium botulinum (strain ATCC 19397 / Type A), this protein is Glutamate--tRNA ligase.